The sequence spans 366 residues: MEGKTTMKGLAMLGIGRIGWIEKKIPECGPLDALVRPLALAPCTSDTHTVWAGAIGDRHDMILGHEAVGQIVKVGSLVKRLKVGDKVIVPAITPDWGEEESQRGYPMHSGGMLGGWKFSNFKDGVFSEVFHVNEADANLALLPRDIKPEDAVMLSDMVTTGFHGAELANIKLGDTVCVIGIGPVGLMSVAGANHLGAGRIFAVGSRKHCCDIALEYGATDIINYKNGDIVEQILKATDGKGVDKVVIAGGDVHTFAQAVKMIKPGSDIGNVNYLGEGDNIDIPRSEWGVGMGHKHIHGGLTPGGRVRMEKLASLISTGKLDTSKLITHRFEGLEKVEDALMLMKNKPADLIKPVVRIHYDDEDTLH.

Residues C43, H65, E66, and D156 each coordinate Zn(2+). NADP(+) contacts are provided by residues 181–184 (IGPV), 204–206 (GSR), Y224, 271–273 (VNY), and K346.

This sequence belongs to the zinc-containing alcohol dehydrogenase family. Homodimer. The cofactor is Zn(2+).

It localises to the cytoplasm. It carries out the reaction propan-2-ol + NADP(+) = acetone + NADPH + H(+). Alcohol dehydrogenase with a preference for medium chain secondary alcohols, such as 2-butanol and isopropanol. Has very low activity with primary alcohols, such as ethanol. Under physiological conditions, the enzyme reduces aldehydes and 2-ketones to produce secondary alcohols. Is also active with acetaldehyde and propionaldehyde. This Entamoeba histolytica (strain ATCC 30459 / HM-1:IMSS / ABRM) protein is NADP-dependent isopropanol dehydrogenase.